Reading from the N-terminus, the 431-residue chain is Tol-Pal system protein TolB (431 aa).

Residues 1–26 (MSLMTKLGFRALVASCLIAAGGAANA) form the signal peptide. The segment at 411-431 (PQILSVQGGSVREPSWGPFMQ) is disordered.

It belongs to the TolB family. In terms of assembly, the Tol-Pal system is composed of five core proteins: the inner membrane proteins TolA, TolQ and TolR, the periplasmic protein TolB and the outer membrane protein Pal. They form a network linking the inner and outer membranes and the peptidoglycan layer.

The protein resides in the periplasm. Its function is as follows. Part of the Tol-Pal system, which plays a role in outer membrane invagination during cell division and is important for maintaining outer membrane integrity. This is Tol-Pal system protein TolB from Burkholderia vietnamiensis (strain G4 / LMG 22486) (Burkholderia cepacia (strain R1808)).